The primary structure comprises 779 residues: Glutathione biosynthesis bifunctional protein GshAB (779 aa).

Positions 1–346 (MAFSKNILDS…ETANRNQEQA (346 aa)) are glutamate--cysteine ligase. Residues 512–768 (KKILDQAGIN…LDDKILDALG (257 aa)) form the ATP-grasp domain. 539–597 (PYYRGRAIVIKPKSTNFGIGITIIKENNRHDFFAQGIAQAFKHEATVLIENFSSGKEYR) is a binding site for ATP. Asp-719, Glu-738, and Asn-740 together coordinate Mg(2+). Mn(2+) contacts are provided by Asp-719, Glu-738, and Asn-740.

This sequence in the N-terminal section; belongs to the glutamate--cysteine ligase type 1 family. Type 2 subfamily. Monomer. It depends on Mg(2+) as a cofactor. Mn(2+) serves as cofactor.

The enzyme catalyses L-cysteine + L-glutamate + ATP = gamma-L-glutamyl-L-cysteine + ADP + phosphate + H(+). It catalyses the reaction gamma-L-glutamyl-L-cysteine + glycine + ATP = glutathione + ADP + phosphate + H(+). Its pathway is sulfur metabolism; glutathione biosynthesis; glutathione from L-cysteine and L-glutamate: step 1/2. The protein operates within sulfur metabolism; glutathione biosynthesis; glutathione from L-cysteine and L-glutamate: step 2/2. Its function is as follows. Synthesizes glutathione from L-glutamate and L-cysteine via gamma-L-glutamyl-L-cysteine. The chain is Glutathione biosynthesis bifunctional protein GshAB from Desulfotalea psychrophila (strain LSv54 / DSM 12343).